The chain runs to 448 residues: Chromosomal replication initiator protein DnaA (448 aa).

Residues 1–72 (MPDLQELWNY…VEGAYEFAEI (72 aa)) form a domain I, interacts with DnaA modulators region. Residues 72 to 110 (IELTPIFVLPGESDNLTPLEPEEEHVLTKAETPTFLRET) form a domain II region. The domain III, AAA+ region stretch occupies residues 111-327 (HLNSKYTFDT…GALVRVQAYA (217 aa)). G155, G157, K158, and T159 together coordinate ATP. Residues 328-448 (TMQNAEITTS…ILDLKNTMKS (121 aa)) are domain IV, binds dsDNA.

The protein belongs to the DnaA family. Oligomerizes as a right-handed, spiral filament on DNA at oriC.

It localises to the cytoplasm. Plays an essential role in the initiation and regulation of chromosomal replication. ATP-DnaA binds to the origin of replication (oriC) to initiate formation of the DNA replication initiation complex once per cell cycle. Binds the DnaA box (a 9 base pair repeat at the origin) and separates the double-stranded (ds)DNA. Forms a right-handed helical filament on oriC DNA; dsDNA binds to the exterior of the filament while single-stranded (ss)DNA is stabiized in the filament's interior. The ATP-DnaA-oriC complex binds and stabilizes one strand of the AT-rich DNA unwinding element (DUE), permitting loading of DNA polymerase. After initiation quickly degrades to an ADP-DnaA complex that is not apt for DNA replication. Binds acidic phospholipids. This Latilactobacillus sakei subsp. sakei (strain 23K) (Lactobacillus sakei subsp. sakei) protein is Chromosomal replication initiator protein DnaA.